A 112-amino-acid polypeptide reads, in one-letter code: Small ribosomal subunit protein uS17 (112 aa).

Belongs to the universal ribosomal protein uS17 family. As to quaternary structure, part of the 30S ribosomal subunit.

In terms of biological role, one of the primary rRNA binding proteins, it binds specifically to the 5'-end of 16S ribosomal RNA. The protein is Small ribosomal subunit protein uS17 of Haloarcula marismortui (strain ATCC 43049 / DSM 3752 / JCM 8966 / VKM B-1809) (Halobacterium marismortui).